A 266-amino-acid chain; its full sequence is Norfluorocurarine synthase 1 (266 aa).

The AB hydrolase-1 domain maps to 11–121 (HFVLVHGAGH…VMPDAVNPPS (111 aa)). Residues Ser-86, Asp-216, and His-244 contribute to the active site.

Belongs to the AB hydrolase superfamily. Homodimer.

The enzyme catalyses 17-dehydropreakuammicine + H2O = norfluorocurarine + methanol + CO2. It participates in alkaloid biosynthesis. Functionally, hydrolase involved in the biosynthesis of curare monoterpene indole alkaloids (MIAs), natural products such as diaboline, a pharmacologically active compound used to regulate blood pressure. Curare alkaloids act as animal glycine receptor antagonists. Catalyzes the conversion of dehydropreakuammicine to norfluorocurarine. The chain is Norfluorocurarine synthase 1 from Strychnos sp.